Reading from the N-terminus, the 276-residue chain is Formamidopyrimidine-DNA glycosylase (276 aa).

The active-site Schiff-base intermediate with DNA is P2. The active-site Proton donor is the E3. K58 (proton donor; for beta-elimination activity) is an active-site residue. DNA contacts are provided by H92, R111, and K154. The segment at 239 to 273 (QVYGHAGEECNNCGTILEKIKVNGRGTTFCPHCQV) adopts an FPG-type zinc-finger fold. The active-site Proton donor; for delta-elimination activity is R263.

It belongs to the FPG family. As to quaternary structure, monomer. Zn(2+) serves as cofactor.

It catalyses the reaction Hydrolysis of DNA containing ring-opened 7-methylguanine residues, releasing 2,6-diamino-4-hydroxy-5-(N-methyl)formamidopyrimidine.. The catalysed reaction is 2'-deoxyribonucleotide-(2'-deoxyribose 5'-phosphate)-2'-deoxyribonucleotide-DNA = a 3'-end 2'-deoxyribonucleotide-(2,3-dehydro-2,3-deoxyribose 5'-phosphate)-DNA + a 5'-end 5'-phospho-2'-deoxyribonucleoside-DNA + H(+). Involved in base excision repair of DNA damaged by oxidation or by mutagenic agents. Acts as a DNA glycosylase that recognizes and removes damaged bases. Has a preference for oxidized purines, such as 7,8-dihydro-8-oxoguanine (8-oxoG). Has AP (apurinic/apyrimidinic) lyase activity and introduces nicks in the DNA strand. Cleaves the DNA backbone by beta-delta elimination to generate a single-strand break at the site of the removed base with both 3'- and 5'-phosphates. This is Formamidopyrimidine-DNA glycosylase from Lactobacillus johnsonii (strain CNCM I-12250 / La1 / NCC 533).